Reading from the N-terminus, the 547-residue chain is Cdc42-interacting protein 4 (547 aa).

Residues 1–117 form a required for translocation to the plasma membrane in response to insulin, podosome formation and interaction with AKAP9 and microtubules region; that stretch reads MDWGTELWDQ…EMKQERKMHF (117 aa). The region spanning 1–264 is the F-BAR domain; sequence MDWGTELWDQ…AAESVDAKND (264 aa). A coiled-coil region spans residues 67–259; sequence FSQQQSFVQL…EGMKVAAESV (193 aa). The interval 293 to 483 is interaction with CDC42; the sequence is RVPSDSSLGT…YTEFDEDFEE (191 aa). The interval 293 to 547 is interaction with PDE6G; sequence RVPSDSSLGT…PTSYLRVTLN (255 aa). The segment at 294 to 323 is disordered; sequence VPSDSSLGTPDGRPELRAASSRSRAKRWPF. S296, S298, and S299 each carry phosphoserine. Residues 332–425 adopt a coiled-coil conformation; it reads TEDFSHLPPE…ESRVLSNRGD (94 aa). Positions 337–414 constitute an REM-1 domain; sequence HLPPEQQRKR…VQKYEAWLAE (78 aa). A required for interaction with FASLG and localization to lysosomes region spans residues 415-547; that stretch reads AESRVLSNRG…PTSYLRVTLN (133 aa). The tract at residues 420–485 is disordered; that stretch reads LSNRGDSLSR…EFDEDFEEPA (66 aa). S426 is subject to Phosphoserine. The interval 431-487 is interaction with DNM2 and WASL; sequence TRPPDPPTTAPPDSSSSSNNSGSQDNKESSEEPPSEEGQDTPIYTEFDEDFEEPASP. Positions 441–451 are enriched in low complexity; it reads PPDSSSSSNNS. Positions 476–547 are interaction with DNM1 and WASL; that stretch reads EFDEDFEEPA…PTSYLRVTLN (72 aa). The tract at residues 484 to 547 is required for podosome formation; it reads PASPIGQCVA…PTSYLRVTLN (64 aa). Residues 486 to 547 enclose the SH3 domain; that stretch reads SPIGQCVAIY…PTSYLRVTLN (62 aa). Positions 490–547 are interaction with WAS; sequence QCVAIYHFEGSSEGTVSMSEGEDLSLMEEDKGDGWTRVRRKQGGEGYVPTSYLRVTLN. The segment at 492 to 547 is interaction with ARHGAP17, DAAM1, DIAPH1 and DIAPH2; it reads VAIYHFEGSSEGTVSMSEGEDLSLMEEDKGDGWTRVRRKQGGEGYVPTSYLRVTLN.

Belongs to the FNBP1 family. In terms of assembly, homodimerizes, the dimers can polymerize end-to-end to form filamentous structures. Interacts specifically with GTP-bound CDC42 and RHOQ. Interacts with AKAP9, ARHGAP17, DAAM1, DIAPH1, DIAPH2, DNM1, DNM2, FASLG/FASL, GAPVD1, LYN, microtubules, SRC, WAS/WASP and WASL/N-WASP. Interacts with the ligand binding domain of the thyroid receptor (TR) in the presence of thyroid hormone. May interact with CTNNB1 and HD/HTT. Interacts with PDE6G. In terms of tissue distribution, expressed in adrenal gland, aorta, brain, heart, kidney, liver, skeletal muscle and spleen.

It localises to the cytoplasm. The protein resides in the cytoskeleton. It is found in the cell cortex. The protein localises to the lysosome. Its subcellular location is the golgi apparatus. It localises to the cell membrane. The protein resides in the cell projection. It is found in the phagocytic cup. Its function is as follows. Required to coordinate membrane tubulation with reorganization of the actin cytoskeleton during endocytosis. Also acts as a link between CDC42 signaling and regulation of the actin cytoskeleton. Binds to lipids such as phosphatidylinositol 4,5-bisphosphate and phosphatidylserine and promotes membrane invagination and the formation of tubules. Also enhances actin polymerization in the vicinity of membrane tubules by recruiting WASL/N-WASP which in turn activates the Arp2/3 complex. Actin polymerization and dynamin may promote the fission of membrane tubules to form endocytic vesicles. Required for the formation of podosomes, actin-rich adhesion structures specific to monocyte-derived cells. Required for translocation of GLUT4 to the plasma membrane in response to insulin signaling. May be required for the lysosomal retention of FASLG/FASL. This chain is Cdc42-interacting protein 4 (Trip10), found in Rattus norvegicus (Rat).